A 492-amino-acid chain; its full sequence is N-succinylglutamate 5-semialdehyde dehydrogenase (492 aa).

An NAD(+)-binding site is contributed by 220 to 225 (GSANTG). Active-site residues include E243 and C277.

It belongs to the aldehyde dehydrogenase family. AstD subfamily.

It catalyses the reaction N-succinyl-L-glutamate 5-semialdehyde + NAD(+) + H2O = N-succinyl-L-glutamate + NADH + 2 H(+). It functions in the pathway amino-acid degradation; L-arginine degradation via AST pathway; L-glutamate and succinate from L-arginine: step 4/5. Catalyzes the NAD-dependent reduction of succinylglutamate semialdehyde into succinylglutamate. The protein is N-succinylglutamate 5-semialdehyde dehydrogenase of Escherichia coli O6:K15:H31 (strain 536 / UPEC).